Here is a 112-residue protein sequence, read N- to C-terminus: MSRMNDETMEDKPDDSNGPLSILMDSVNNNTQVLINVRNNKKLLGRVRAFDRHCNMVLENVKEIWTEVPKTAKGKKKAKPINKDRFISKMFLRGDSVILVLKNPLGAPPQAN.

Residues 1–15 show a composition bias toward basic and acidic residues; sequence MSRMNDETMEDKPDD. The disordered stretch occupies residues 1-23; the sequence is MSRMNDETMEDKPDDSNGPLSIL. Residues 20–106 enclose the Sm domain; that stretch reads LSILMDSVNN…VILVLKNPLG (87 aa).

Belongs to the snRNP core protein family.

It is found in the nucleus. It localises to the cytoplasm. The protein resides in the cytosol. In terms of biological role, plays a role in pre-mRNA splicing as a core component of the spliceosomal U1, U2, U4 and U5 small nuclear ribonucleoproteins (snRNPs), the building blocks of the spliceosome. The polypeptide is Probable small nuclear ribonucleoprotein Sm D2 (snrpd2) (Dictyostelium discoideum (Social amoeba)).